The sequence spans 31 residues: Mu-conotoxin SmIIIA (31 aa).

Positions 1–6 (PLFDKR) are excised as a propeptide. Gln-7 carries the post-translational modification Pyrrolidone carboxylic acid. Disulfide bonds link Cys-9-Cys-21, Cys-10-Cys-27, and Cys-16-Cys-28. The residue at position 28 (Cys-28) is a Cysteine amide.

Belongs to the conotoxin M superfamily. Post-translationally, smIIIA' is a putative isoform where the N-terminal AA is missing. In terms of tissue distribution, expressed by the venom duct.

The protein resides in the secreted. In terms of biological role, mu-conotoxins block voltage-gated sodium channels (Nav). This toxin blocks rNav1.5/SCN5A (IC(50) is 1.3 uM), rNav1.6/SCN8A (IC(50) is 160 nM), rNav1.7/SCN9A (IC(50) is 1.3 uM), rNav1.1/SCN1A (K(d) is 3.8 nM), rNav1.2/SCN2A (K(d) is 1.3 nM), rNav1.4/SCN4A (K(d) is 0.22 nM), rNav1.6/SCN8A (K(d) is 69 nM), and rNav1.7/SCN9A (K(d) is 260 nM). This toxin is very potent but weakly discriminating among sodium channels. The block of these channels is modified when beta-subunits are coexpressed with alpha subunits. Hence, blocks of channels containing beta-1 and beta-3 subunits are more potent (compared to channels without beta subunits), whereas blocks of channels containing beta-2 and beta-4 subunits are less potent (compared to channels without beta subunits). This is Mu-conotoxin SmIIIA from Conus stercusmuscarum (Fly-specked cone).